The primary structure comprises 61 residues: Small ribosomal subunit protein uS14C (61 aa).

Residues C24, C27, C40, and C43 each contribute to the Zn(2+) site.

The protein belongs to the universal ribosomal protein uS14 family. Zinc-binding uS14 subfamily. In terms of assembly, part of the 30S ribosomal subunit. Contacts proteins S3 and S10. Requires Zn(2+) as cofactor.

Binds 16S rRNA, required for the assembly of 30S particles and may also be responsible for determining the conformation of the 16S rRNA at the A site. The polypeptide is Small ribosomal subunit protein uS14C (Enterococcus faecalis (strain ATCC 700802 / V583)).